We begin with the raw amino-acid sequence, 628 residues long: Biosynthetic arginine decarboxylase (628 aa).

Residue K99 is modified to N6-(pyridoxal phosphate)lysine. Position 279–289 (279–289 (VDVGGGLGIDY)) interacts with substrate.

It belongs to the Orn/Lys/Arg decarboxylase class-II family. SpeA subfamily. Mg(2+) is required as a cofactor. The cofactor is pyridoxal 5'-phosphate.

It catalyses the reaction L-arginine + H(+) = agmatine + CO2. In terms of biological role, catalyzes the biosynthesis of agmatine from arginine. The sequence is that of Biosynthetic arginine decarboxylase from Xylella fastidiosa (strain 9a5c).